Consider the following 176-residue polypeptide: Ribosome maturation factor RimM (176 aa).

The PRC barrel domain occupies 93 to 168 (DDEVYIEDIL…TIRITPPPGL (76 aa)).

Belongs to the RimM family. Binds ribosomal protein uS19.

The protein localises to the cytoplasm. Its function is as follows. An accessory protein needed during the final step in the assembly of 30S ribosomal subunit, possibly for assembly of the head region. Essential for efficient processing of 16S rRNA. May be needed both before and after RbfA during the maturation of 16S rRNA. It has affinity for free ribosomal 30S subunits but not for 70S ribosomes. The polypeptide is Ribosome maturation factor RimM (Oleidesulfovibrio alaskensis (strain ATCC BAA-1058 / DSM 17464 / G20) (Desulfovibrio alaskensis)).